We begin with the raw amino-acid sequence, 32 residues long: U6-ctenitoxin-Pr1a (32 aa).

Cystine bridges form between C3–C17, C10–C21, and C16–C30.

In terms of tissue distribution, expressed by the venom gland.

Its subcellular location is the secreted. This chain is U6-ctenitoxin-Pr1a, found in Phoneutria reidyi (Brazilian Amazonian armed spider).